A 1881-amino-acid chain; its full sequence is Kinesin-like protein KIF26A (1881 aa).

Disordered stretches follow at residues Pro20–Gly66, Pro145–Pro193, and Ala309–Pro330. Ser30 is subject to Phosphoserine. The Kinesin motor domain maps to Lys364–Leu718. Gly462 to Ser469 provides a ligand contact to ATP. Disordered stretches follow at residues Leu718–Gln778, Ser794–Asp827, Gly846–Leu982, Tyr1078–Ala1104, Leu1118–Pro1266, Ser1328–Pro1425, Ser1442–Leu1633, and Tyr1652–Gln1698. Residues Arg742–His751 show a composition bias toward basic residues. Residues Arg818–Asp827 show a composition bias toward basic and acidic residues. The segment covering Ser905 to Glu915 has biased composition (polar residues). The span at Leu940 to Gln950 shows a compositional bias: pro residues. Over residues Glu1084–Gly1095 the composition is skewed to low complexity. Residues Glu1151–Arg1162 show a composition bias toward basic and acidic residues. Ser1257 carries the post-translational modification Phosphoserine. Residues Ser1328 to Gly1353 show a composition bias toward low complexity. Positions Leu1366–Leu1378 are enriched in polar residues. Positions Arg1390–Gly1399 are enriched in basic and acidic residues. Over residues Arg1400–Leu1412 the composition is skewed to polar residues. Composition is skewed to low complexity over residues Pro1477–Gly1489, Pro1524–Gly1537, and Trp1575–Gly1587. The span at Arg1616–Leu1629 shows a compositional bias: polar residues. The residue at position 1654 (Ser1654) is a Phosphoserine. Residues Ser1664–Ser1675 are compositionally biased toward low complexity. A compositionally biased stretch (basic residues) spans Arg1685 to Gln1698. The stretch at Leu1780–Met1812 forms a coiled coil.

This sequence belongs to the TRAFAC class myosin-kinesin ATPase superfamily. Kinesin family. KIF26 subfamily. In terms of assembly, interacts with GRB2 (via SH2 domain). Expressed in several neuronal populations.

Its subcellular location is the cytoplasm. The protein resides in the cytoskeleton. Its function is as follows. Atypical kinesin that plays a key role in enteric neuron development. Acts by repressing a cell growth signaling pathway in the enteric nervous system development, possibly via its interaction with GRB2 that prevents GRB2-binding to SHC, thereby attenating the GDNF-Ret signaling. Binds to microtubules but lacks microtubule-based motility due to the absence of ATPase activity. Plays a critical role in cerebral cortical development. It probably acts as a microtubule stabilizer that regulates neurite growth and radial migration of cortical excitatory neurons. The polypeptide is Kinesin-like protein KIF26A (Kif26a) (Mus musculus (Mouse)).